The chain runs to 33 residues: Sucrose-6-phosphate hydrolase (33 aa).

15–18 (PLQE) serves as a coordination point for substrate. The active site involves glutamate 18.

It belongs to the glycosyl hydrolase 32 family.

It carries out the reaction Hydrolysis of terminal non-reducing beta-D-fructofuranoside residues in beta-D-fructofuranosides.. It functions in the pathway glycan biosynthesis; sucrose metabolism. This Fusobacterium mortiferum protein is Sucrose-6-phosphate hydrolase.